The primary structure comprises 57 residues: Protein translocase subunit SecE (57 aa).

The helical transmembrane segment at Ala-34–Val-54 threads the bilayer.

The protein belongs to the SecE/SEC61-gamma family. In terms of assembly, component of the Sec protein translocase complex. Heterotrimer consisting of SecY (alpha), SecG (beta) and SecE (gamma) subunits. The heterotrimers can form oligomers, although 1 heterotrimer is thought to be able to translocate proteins. Interacts with the ribosome. May interact with SecDF, and other proteins may be involved.

The protein localises to the cell membrane. In terms of biological role, essential subunit of the Sec protein translocation channel SecYEG. Clamps together the 2 halves of SecY. May contact the channel plug during translocation. This Halobacterium salinarum (strain ATCC 29341 / DSM 671 / R1) protein is Protein translocase subunit SecE.